We begin with the raw amino-acid sequence, 220 residues long: Ribonuclease HII (220 aa).

The RNase H type-2 domain occupies 32 to 220 (KHIAGIDEAG…FAPIKGRFDC (189 aa)). Residues D38, E39, and D130 each contribute to the a divalent metal cation site.

This sequence belongs to the RNase HII family. It depends on Mn(2+) as a cofactor. Requires Mg(2+) as cofactor.

It is found in the cytoplasm. The enzyme catalyses Endonucleolytic cleavage to 5'-phosphomonoester.. In terms of biological role, endonuclease that specifically degrades the RNA of RNA-DNA hybrids. The protein is Ribonuclease HII of Brucella suis (strain ATCC 23445 / NCTC 10510).